The primary structure comprises 386 residues: LL-diaminopimelate aminotransferase (386 aa).

Substrate contacts are provided by Y13 and G38. Pyridoxal 5'-phosphate-binding positions include Y67, S101 to K102, Y126, N176, Y207, and S235 to S237. Substrate is bound by residues K102, Y126, and N176. Residue K238 is modified to N6-(pyridoxal phosphate)lysine. R246 is a pyridoxal 5'-phosphate binding site. R364 contributes to the substrate binding site.

This sequence belongs to the class-I pyridoxal-phosphate-dependent aminotransferase family. LL-diaminopimelate aminotransferase subfamily. In terms of assembly, homodimer. It depends on pyridoxal 5'-phosphate as a cofactor.

The catalysed reaction is (2S,6S)-2,6-diaminopimelate + 2-oxoglutarate = (S)-2,3,4,5-tetrahydrodipicolinate + L-glutamate + H2O + H(+). It participates in amino-acid biosynthesis; L-lysine biosynthesis via DAP pathway; LL-2,6-diaminopimelate from (S)-tetrahydrodipicolinate (aminotransferase route): step 1/1. Involved in the synthesis of meso-diaminopimelate (m-DAP or DL-DAP), required for both lysine and peptidoglycan biosynthesis. Catalyzes the direct conversion of tetrahydrodipicolinate to LL-diaminopimelate. The chain is LL-diaminopimelate aminotransferase from Natranaerobius thermophilus (strain ATCC BAA-1301 / DSM 18059 / JW/NM-WN-LF).